Reading from the N-terminus, the 206-residue chain is Imidazoleglycerol-phosphate dehydratase (206 aa).

Belongs to the imidazoleglycerol-phosphate dehydratase family.

It localises to the cytoplasm. It catalyses the reaction D-erythro-1-(imidazol-4-yl)glycerol 3-phosphate = 3-(imidazol-4-yl)-2-oxopropyl phosphate + H2O. Its pathway is amino-acid biosynthesis; L-histidine biosynthesis; L-histidine from 5-phospho-alpha-D-ribose 1-diphosphate: step 6/9. The chain is Imidazoleglycerol-phosphate dehydratase from Leptospira borgpetersenii serovar Hardjo-bovis (strain JB197).